A 111-amino-acid polypeptide reads, in one-letter code: Large ribosomal subunit protein uL22 (111 aa).

The protein belongs to the universal ribosomal protein uL22 family. As to quaternary structure, part of the 50S ribosomal subunit.

This protein binds specifically to 23S rRNA; its binding is stimulated by other ribosomal proteins, e.g. L4, L17, and L20. It is important during the early stages of 50S assembly. It makes multiple contacts with different domains of the 23S rRNA in the assembled 50S subunit and ribosome. Its function is as follows. The globular domain of the protein is located near the polypeptide exit tunnel on the outside of the subunit, while an extended beta-hairpin is found that lines the wall of the exit tunnel in the center of the 70S ribosome. This is Large ribosomal subunit protein uL22 from Clostridium kluyveri (strain NBRC 12016).